The chain runs to 226 residues: RNA pyrophosphohydrolase (226 aa).

The Nudix hydrolase domain maps to 6–149 (GFRPNVGIIL…KRGVYEMALT (144 aa)). A Nudix box motif is present at residues 38–59 (GGIDRGETPEQAMFRELHEEVG). The interval 197–226 (MELPPGASFDPDPRTGDGDPGMPGIHKPAG) is disordered.

It belongs to the Nudix hydrolase family. RppH subfamily. It depends on a divalent metal cation as a cofactor.

Functionally, accelerates the degradation of transcripts by removing pyrophosphate from the 5'-end of triphosphorylated RNA, leading to a more labile monophosphorylated state that can stimulate subsequent ribonuclease cleavage. This is RNA pyrophosphohydrolase from Paracidovorax citrulli (strain AAC00-1) (Acidovorax citrulli).